The chain runs to 353 residues: Holliday junction branch migration complex subunit RuvB (353 aa).

The interval 4–185 (ADRLITAVGG…FGIVQRLEFY (182 aa)) is large ATPase domain (RuvB-L). ATP-binding positions include isoleucine 24, arginine 25, glycine 66, lysine 69, threonine 70, threonine 71, 132–134 (EDF), arginine 175, tyrosine 185, and arginine 222. Mg(2+) is bound at residue threonine 70. The tract at residues 186 to 256 (NIADLSTIVA…TADKALNLLD (71 aa)) is small ATPAse domain (RuvB-S). Residues 259 to 353 (EHGFDHQDRR…GEFVDDAADL (95 aa)) form a head domain (RuvB-H) region. Residues arginine 295, arginine 314, and arginine 319 each contribute to the DNA site.

It belongs to the RuvB family. In terms of assembly, homohexamer. Forms an RuvA(8)-RuvB(12)-Holliday junction (HJ) complex. HJ DNA is sandwiched between 2 RuvA tetramers; dsDNA enters through RuvA and exits via RuvB. An RuvB hexamer assembles on each DNA strand where it exits the tetramer. Each RuvB hexamer is contacted by two RuvA subunits (via domain III) on 2 adjacent RuvB subunits; this complex drives branch migration. In the full resolvosome a probable DNA-RuvA(4)-RuvB(12)-RuvC(2) complex forms which resolves the HJ.

The protein localises to the cytoplasm. It carries out the reaction ATP + H2O = ADP + phosphate + H(+). Functionally, the RuvA-RuvB-RuvC complex processes Holliday junction (HJ) DNA during genetic recombination and DNA repair, while the RuvA-RuvB complex plays an important role in the rescue of blocked DNA replication forks via replication fork reversal (RFR). RuvA specifically binds to HJ cruciform DNA, conferring on it an open structure. The RuvB hexamer acts as an ATP-dependent pump, pulling dsDNA into and through the RuvAB complex. RuvB forms 2 homohexamers on either side of HJ DNA bound by 1 or 2 RuvA tetramers; 4 subunits per hexamer contact DNA at a time. Coordinated motions by a converter formed by DNA-disengaged RuvB subunits stimulates ATP hydrolysis and nucleotide exchange. Immobilization of the converter enables RuvB to convert the ATP-contained energy into a lever motion, pulling 2 nucleotides of DNA out of the RuvA tetramer per ATP hydrolyzed, thus driving DNA branch migration. The RuvB motors rotate together with the DNA substrate, which together with the progressing nucleotide cycle form the mechanistic basis for DNA recombination by continuous HJ branch migration. Branch migration allows RuvC to scan DNA until it finds its consensus sequence, where it cleaves and resolves cruciform DNA. The protein is Holliday junction branch migration complex subunit RuvB of Pseudomonas syringae pv. tomato (strain ATCC BAA-871 / DC3000).